The sequence spans 480 residues: Argininosuccinate lyase (480 aa).

A disordered region spans residues 1 to 20 (MTQQDGGQAGQAEPTKLWGG).

This sequence belongs to the lyase 1 family. Argininosuccinate lyase subfamily.

It localises to the cytoplasm. It catalyses the reaction 2-(N(omega)-L-arginino)succinate = fumarate + L-arginine. It participates in amino-acid biosynthesis; L-arginine biosynthesis; L-arginine from L-ornithine and carbamoyl phosphate: step 3/3. This chain is Argininosuccinate lyase, found in Saccharopolyspora erythraea (strain ATCC 11635 / DSM 40517 / JCM 4748 / NBRC 13426 / NCIMB 8594 / NRRL 2338).